Consider the following 144-residue polypeptide: L-fucose mutarotase (144 aa).

His22 (proton donor) is an active-site residue. Substrate contacts are provided by residues Asp30, Arg109, and 131-133 (YGN).

The protein belongs to the RbsD / FucU family. FucU mutarotase subfamily. As to quaternary structure, homodecamer.

It localises to the cytoplasm. It catalyses the reaction alpha-L-fucose = beta-L-fucose. The protein operates within carbohydrate metabolism; L-fucose metabolism. Functionally, involved in the anomeric conversion of L-fucose. The chain is L-fucose mutarotase from Histophilus somni (strain 2336) (Haemophilus somnus).